The following is a 569-amino-acid chain: Atlastin-2 (569 aa).

The interval 1–49 is N-terminal hypervariable region (HVR); it reads MAEGGSLRNRTRFGSRSNEAMNHVDYPDENFVEEIQLNSDTEVMEKPRP. The Cytoplasmic segment spans residues 1 to 464; the sequence is MAEGGSLRNR…NIFYAARTPA (464 aa). A GB1/RHD3-type G domain is found at 80–324; that stretch reads DLNVVVLSVA…LVPLLLAPEN (245 aa). GDP is bound by residues Arg93, Lys94, Gly95, Lys96, Ser97, Phe98, Gln163, Arg232, and Asp233. 6 residues coordinate GTP: Arg93, Lys94, Gly95, Lys96, Ser97, and Phe98. Ser97 provides a ligand contact to Mg(2+). The GTP site is built by Arg232 and Asp233. Residues 244–272 adopt a coiled-coil conformation; the sequence is LEGGNKFLEKRLQVKQNQHEELQNVRKHI. Residues Val291 and Asn294 each coordinate GDP. Val291 contributes to the GTP binding site. A 3HB (three-helix bundle) domain region spans residues 362-453; sequence MLQATAEANN…YANFLKHNDG (92 aa). Positions 454 to 462 are linker; it reads KNIFYAART. Residues 465-485 form a helical membrane-spanning segment; it reads TLFAVMFAMYIISGLTGFIGM. The Lumenal segment spans residues 486–487; the sequence is NS. A helical transmembrane segment spans residues 488–508; sequence IATICNLIMGLTLLSFCTWAY. The Cytoplasmic portion of the chain corresponds to 509–569; that stretch reads VKYSGEFREL…DQVSGRLKTN (61 aa). The autoinhibitory domain stretch occupies residues 535 to 569; that stretch reads KPLSDNLMEDNIRQTVRNSIKAGLTDQVSGRLKTN.

This sequence belongs to the TRAFAC class dynamin-like GTPase superfamily. GB1/RHD3 GTPase family. GB1 subfamily. In terms of assembly, monomeric and homodimeric. The homodimer, transiently formed by two molecules on opposing membranes, is the active form mediating ER membrane fusion.

Its subcellular location is the endoplasmic reticulum membrane. It catalyses the reaction GTP + H2O = GDP + phosphate + H(+). Its function is as follows. Atlastin-2 (ATL2) is a membrane-anchored GTPase that mediates the GTP-dependent fusion of endoplasmic reticulum (ER) membranes, maintaining the continuous ER network. It facilitates the formation of three-way junctions where ER tubules intersect. Two atlastin-2 on neighboring ER tubules bind GTP and form loose homodimers through the GB1/RHD3-type G domains and 3HB regions. Upon GTP hydrolysis, the 3HB regions tighten, pulling the membranes together to drive their fusion. After fusion, the homodimer disassembles upon release of inorganic phosphate (Pi). Subsequently, GDP dissociates, resetting the monomers to a conformation ready for a new fusion cycle. This chain is Atlastin-2 (atl2), found in Xenopus laevis (African clawed frog).